We begin with the raw amino-acid sequence, 291 residues long: Glycine--tRNA ligase alpha subunit (291 aa).

This sequence belongs to the class-II aminoacyl-tRNA synthetase family. As to quaternary structure, tetramer of two alpha and two beta subunits.

Its subcellular location is the cytoplasm. The catalysed reaction is tRNA(Gly) + glycine + ATP = glycyl-tRNA(Gly) + AMP + diphosphate. This chain is Glycine--tRNA ligase alpha subunit, found in Coprothermobacter proteolyticus (strain ATCC 35245 / DSM 5265 / OCM 4 / BT).